Reading from the N-terminus, the 386-residue chain is Ribonucleoside-diphosphate reductase subunit M2 (386 aa).

Residues 1 to 24 are compositionally biased toward polar residues; it reads MSSTRSPLKTKNENTISTKMNNMS. The disordered stretch occupies residues 1-36; that stretch reads MSSTRSPLKTKNENTISTKMNNMSFVDKENTPPSLS. Residue Ser-6 is modified to Phosphoserine. A Phosphothreonine modification is found at Thr-31. Asp-135, Glu-166, and His-169 together coordinate Fe cation. Tyr-173 is an active-site residue. Residues Glu-229, Glu-263, and His-266 each contribute to the Fe cation site.

This sequence belongs to the ribonucleoside diphosphate reductase small chain family. In terms of assembly, heterodimer of a large and a small subunit. Fe cation serves as cofactor.

The protein localises to the cytoplasm. It catalyses the reaction a 2'-deoxyribonucleoside 5'-diphosphate + [thioredoxin]-disulfide + H2O = a ribonucleoside 5'-diphosphate + [thioredoxin]-dithiol. Functionally, provides the precursors necessary for DNA synthesis. Catalyzes the biosynthesis of deoxyribonucleotides from the corresponding ribonucleotides. The sequence is that of Ribonucleoside-diphosphate reductase subunit M2 (rrm2) from Danio rerio (Zebrafish).